Reading from the N-terminus, the 562-residue chain is MTTTTTVKSDIEIAQEASMKKIQEIAAELNILEDELEPYGHYKGKLSLDIFKRLQNEEDGKVVLVTAINPTPAGEGKSTVTVGLGQAFNKIGKKTVIALREPSLGPTMGLKGGAAGGGFSQVVPMEDINLHFTGDIHAITTANNALAAFIDNHIQQGNTLGIDTRKIVWKRCVDLNDRALRNVVIGLGGPVQGVPREDGFDITVASEIMAVFCLATDIQDLKARLSRIVVAYNFANQPVTVKDLGVEGALTLLLKDALKPNLVQTLENTPAIIHGGPFANIAHGCNSVIATTMAAKLGDYVITEAGFGADLGAEKFLDIKARAAGIKPEAVVIVATIRALKMHGGVAKDQLKEENVDALAKGMENLQKHVETIQSFGVPFVIAINKFITDTDAEVAYLQEWCNERGYAVSLTEVWEKGGQGGVDLAEKVLKEIEKGENNYAPLYELELPLEEKIRTIAQKVYGAKDIEFAPKARKQLAQYEGEGWSNLPICMAKTQYSLSDDATKLGRPSDFIVTIRELKPSIGAGFIVALTGTMLTMPGLPKQPAALQMDVNEDGKAVGLF.

71–78 (TPAGEGKS) contacts ATP.

Belongs to the formate--tetrahydrofolate ligase family.

It catalyses the reaction (6S)-5,6,7,8-tetrahydrofolate + formate + ATP = (6R)-10-formyltetrahydrofolate + ADP + phosphate. It functions in the pathway one-carbon metabolism; tetrahydrofolate interconversion. In Bacillus cereus (strain AH187), this protein is Formate--tetrahydrofolate ligase.